The primary structure comprises 559 residues: Dihydroxy-acid dehydratase (559 aa).

Aspartate 81 provides a ligand contact to Mg(2+). Position 122 (cysteine 122) interacts with [2Fe-2S] cluster. Positions 123 and 124 each coordinate Mg(2+). An N6-carboxylysine modification is found at lysine 124. Cysteine 195 is a [2Fe-2S] cluster binding site. Glutamate 448 lines the Mg(2+) pocket. Residue serine 474 is the Proton acceptor of the active site.

This sequence belongs to the IlvD/Edd family. As to quaternary structure, homodimer. Requires [2Fe-2S] cluster as cofactor. It depends on Mg(2+) as a cofactor.

It catalyses the reaction (2R)-2,3-dihydroxy-3-methylbutanoate = 3-methyl-2-oxobutanoate + H2O. It carries out the reaction (2R,3R)-2,3-dihydroxy-3-methylpentanoate = (S)-3-methyl-2-oxopentanoate + H2O. Its pathway is amino-acid biosynthesis; L-isoleucine biosynthesis; L-isoleucine from 2-oxobutanoate: step 3/4. It functions in the pathway amino-acid biosynthesis; L-valine biosynthesis; L-valine from pyruvate: step 3/4. Functions in the biosynthesis of branched-chain amino acids. Catalyzes the dehydration of (2R,3R)-2,3-dihydroxy-3-methylpentanoate (2,3-dihydroxy-3-methylvalerate) into 2-oxo-3-methylpentanoate (2-oxo-3-methylvalerate) and of (2R)-2,3-dihydroxy-3-methylbutanoate (2,3-dihydroxyisovalerate) into 2-oxo-3-methylbutanoate (2-oxoisovalerate), the penultimate precursor to L-isoleucine and L-valine, respectively. This chain is Dihydroxy-acid dehydratase, found in Geobacillus kaustophilus (strain HTA426).